The primary structure comprises 607 residues: Chaperone protein DnaK (607 aa).

Threonine 174 is modified (phosphothreonine; by autocatalysis). A disordered region spans residues 577 to 607 (GYTASGPQGGPNPGGGQSGPDGNVNTDYKVY). Residues 583–595 (PQGGPNPGGGQSG) are compositionally biased toward gly residues.

It belongs to the heat shock protein 70 family.

Its function is as follows. Acts as a chaperone. This Caldicellulosiruptor bescii (strain ATCC BAA-1888 / DSM 6725 / KCTC 15123 / Z-1320) (Anaerocellum thermophilum) protein is Chaperone protein DnaK.